The following is a 362-amino-acid chain: Dual-specificity RNA methyltransferase RlmN (362 aa).

The active-site Proton acceptor is the E91. The region spanning 97–333 (EDDRGTLCVS…VTTRKTRGED (237 aa)) is the Radical SAM core domain. C104 and C338 are disulfide-bonded. The [4Fe-4S] cluster site is built by C111, C115, and C118. S-adenosyl-L-methionine contacts are provided by residues 164–165 (GE), S196, 218–220 (SLH), and N295. The active-site S-methylcysteine intermediate is the C338.

The protein belongs to the radical SAM superfamily. RlmN family. [4Fe-4S] cluster serves as cofactor.

It is found in the cytoplasm. The enzyme catalyses adenosine(2503) in 23S rRNA + 2 reduced [2Fe-2S]-[ferredoxin] + 2 S-adenosyl-L-methionine = 2-methyladenosine(2503) in 23S rRNA + 5'-deoxyadenosine + L-methionine + 2 oxidized [2Fe-2S]-[ferredoxin] + S-adenosyl-L-homocysteine. The catalysed reaction is adenosine(37) in tRNA + 2 reduced [2Fe-2S]-[ferredoxin] + 2 S-adenosyl-L-methionine = 2-methyladenosine(37) in tRNA + 5'-deoxyadenosine + L-methionine + 2 oxidized [2Fe-2S]-[ferredoxin] + S-adenosyl-L-homocysteine. Functionally, specifically methylates position 2 of adenine 2503 in 23S rRNA and position 2 of adenine 37 in tRNAs. m2A2503 modification seems to play a crucial role in the proofreading step occurring at the peptidyl transferase center and thus would serve to optimize ribosomal fidelity. This is Dual-specificity RNA methyltransferase RlmN from Methylobacillus flagellatus (strain ATCC 51484 / DSM 6875 / VKM B-1610 / KT).